A 398-amino-acid chain; its full sequence is MKWFLFLLSTIFVQGILGYHVEREYAWRNVTFEGVNPSSYNVLHSIPTGFAYDAETQKLFVAVPRRYPQVPHTLTEIERKKHPERSPPLSKFSGKSSKDLISIYQPVIDECRRLWVVDVGMVDYKEGQPKYRKQNPAIIAFDLTKENYPEVDRYELPAEVVKNPLSFGCFAVDVINPKGGCSDTFLYITNYEENTIVVYDKKNKASWKVSHDSFKPEKDVNIVLDGGKKYSYKVGIFGITLGDREATGNRMAYYLAGSSTKLYKVSTGALKKKGARFDPIRIGDRGPYTEAITLVYDPKTKVIFFAESITRQVSCWNTQTPLDSNHTDVIYSDARFLFGTDISVDSNSTLWVMANGHPPVDDPDIVNNEFYKPQIRLLYVDTRKSIRRTRCDVNGNKP.

An N-terminal signal peptide occupies residues 1–18 (MKWFLFLLSTIFVQGILG). The disordered stretch occupies residues 73–94 (TLTEIERKKHPERSPPLSKFSG). Over residues 75–85 (TEIERKKHPER) the composition is skewed to basic and acidic residues.

It belongs to the major royal jelly protein family. Female salivary gland (at protein level).

The protein localises to the secreted. Probably modulates blood feeding of sand flies on vertebrate species by binding and sequestering different mediators involved in the host response. Binds biogenic amines. Binds serotonin with high affinity. Binds histamine with low affinity. This is Yellow-related salivary protein SP04 from Phlebotomus argentipes (Phlebotomine sand fly).